A 429-amino-acid polypeptide reads, in one-letter code: Glutamate-1-semialdehyde 2,1-aminomutase (429 aa).

At Lys265 the chain carries N6-(pyridoxal phosphate)lysine.

The protein belongs to the class-III pyridoxal-phosphate-dependent aminotransferase family. HemL subfamily. As to quaternary structure, homodimer. Pyridoxal 5'-phosphate serves as cofactor.

It localises to the cytoplasm. The enzyme catalyses (S)-4-amino-5-oxopentanoate = 5-aminolevulinate. It functions in the pathway porphyrin-containing compound metabolism; protoporphyrin-IX biosynthesis; 5-aminolevulinate from L-glutamyl-tRNA(Glu): step 2/2. The sequence is that of Glutamate-1-semialdehyde 2,1-aminomutase from Shewanella pealeana (strain ATCC 700345 / ANG-SQ1).